Reading from the N-terminus, the 1396-residue chain is DNA-directed RNA polymerase subunit beta' (1396 aa).

Positions 70, 72, 85, and 88 each coordinate Zn(2+). Mg(2+) contacts are provided by aspartate 460, aspartate 462, and aspartate 464. Zn(2+) is bound by residues cysteine 814, cysteine 889, cysteine 896, and cysteine 899.

This sequence belongs to the RNA polymerase beta' chain family. In terms of assembly, the RNAP catalytic core consists of 2 alpha, 1 beta, 1 beta' and 1 omega subunit. When a sigma factor is associated with the core the holoenzyme is formed, which can initiate transcription. The cofactor is Mg(2+). It depends on Zn(2+) as a cofactor.

It catalyses the reaction RNA(n) + a ribonucleoside 5'-triphosphate = RNA(n+1) + diphosphate. Its function is as follows. DNA-dependent RNA polymerase catalyzes the transcription of DNA into RNA using the four ribonucleoside triphosphates as substrates. The chain is DNA-directed RNA polymerase subunit beta' from Hahella chejuensis (strain KCTC 2396).